The primary structure comprises 442 residues: 23S rRNA (uracil(1939)-C(5))-methyltransferase RlmD (442 aa).

One can recognise a TRAM domain in the interval 12-70 (SKQLSAKVTLEVTKLDHLGAGMAQHQGKIVFIPGALPNEKVTVQLTEQKKRHARAKLLK). Positions 83, 89, 92, and 171 each coordinate [4Fe-4S] cluster. Residues Gln276, Phe305, Asn310, Glu326, Asp353, and Asp373 each contribute to the S-adenosyl-L-methionine site. The active-site Nucleophile is the Cys399.

The protein belongs to the class I-like SAM-binding methyltransferase superfamily. RNA M5U methyltransferase family. RlmD subfamily.

It catalyses the reaction uridine(1939) in 23S rRNA + S-adenosyl-L-methionine = 5-methyluridine(1939) in 23S rRNA + S-adenosyl-L-homocysteine + H(+). Its function is as follows. Catalyzes the formation of 5-methyl-uridine at position 1939 (m5U1939) in 23S rRNA. This Shewanella sediminis (strain HAW-EB3) protein is 23S rRNA (uracil(1939)-C(5))-methyltransferase RlmD.